Reading from the N-terminus, the 265-residue chain is MIKWPWKANHTAALAPLPWEAALAIPLLAGLSDEQQQKLVRLSERFLQQKRLVPLQGFELDELKSARIALLFCLPVLELGLEWLDGFHEVLIYPAPFVVDDEWEDDIGLVHNQRVVQSGQSWQQGPIILNWLDIQDSFDASGFNLIIHEVAHKLDMRNGDRASGIPLIALREVAGWEHDLHAAMENIQDEIDLVGESAASIDAYAATDPAECFAVLSEYFFSAPELFAPRFPSLWQRFCHFYGQDPLLRLRLRETPALSDGGQVH.

Zn(2+) is bound by residues His-111, His-148, His-152, and Glu-211.

Belongs to the MtfA family. Interacts with Mlc. The cofactor is Zn(2+).

It localises to the cytoplasm. In terms of biological role, involved in the modulation of the activity of the glucose-phosphotransferase system (glucose-PTS). Interacts with the transcriptional repressor Mlc, preventing its interaction with DNA and leading to the modulation of expression of genes regulated by Mlc, including ptsG, which encodes the PTS system glucose-specific EIICB component. Functionally, shows zinc-dependent metallopeptidase activity. The sequence is that of Mlc titration factor A from Cronobacter sakazakii (strain ATCC BAA-894) (Enterobacter sakazakii).